The primary structure comprises 312 residues: Taste receptor type 2 member 135 (312 aa).

The Extracellular segment spans residues 1 to 19; sequence MSTGHTVLGCQTTDKTVVT. Residues 20–40 traverse the membrane as a helical segment; it reads LFIILVLLCLVAVVGNGFIII. Over 41-66 the chain is Cytoplasmic; that stretch reads ALGMKWLLRRTLSAHNKLLISLAASR. The chain crosses the membrane as a helical span at residues 67–87; the sequence is FCLQCVVIGKNIYVFLNPTSF. The Extracellular portion of the chain corresponds to 88–97; it reads PYNPVIQLLN. The chain crosses the membrane as a helical span at residues 98–118; that stretch reads LMWDFLTAATIWLCSLLGFFY. The Cytoplasmic portion of the chain corresponds to 119-140; that stretch reads CVKIATLTHPVFVWLKYRLPGW. Residues 141 to 161 form a helical membrane-spanning segment; that stretch reads VPWMLLSAVGMSSLTSILCFI. The Extracellular portion of the chain corresponds to 162–198; the sequence is GNYMIYQNHAKSGHQPWNVTGNSLRHSLEKFYFFSIK. N-linked (GlcNAc...) asparagine glycosylation is present at asparagine 179. Residues 199 to 219 form a helical membrane-spanning segment; the sequence is IIMWTIPTVVFSIFMSLLLVS. At 220-244 the chain is on the cytoplasmic side; it reads LVRHMKKTFLALSELRDVWAQAHFK. Residues 245–265 form a helical membrane-spanning segment; the sequence is ALLPLLSFIVLFISCFLTLVL. Topologically, residues 266–277 are extracellular; sequence SSASNTPYQEFR. Residues 278 to 298 traverse the membrane as a helical segment; sequence YWMWQVVIHLCTVIHPIVILF. The Cytoplasmic portion of the chain corresponds to 299-312; that stretch reads SNPVLRVVIKRGCC.

The protein belongs to the G-protein coupled receptor T2R family.

The protein resides in the membrane. Putative taste receptor which may play a role in the perception of bitterness. This is Taste receptor type 2 member 135 (Tas2r135) from Mus musculus (Mouse).